We begin with the raw amino-acid sequence, 222 residues long: Recombination protein RecR (222 aa).

The C4-type zinc finger occupies 57-72; that stretch reads CPVCFNITDAERCDVC. The region spanning 80–173 is the Toprim domain; the sequence is SVICVVEEPG…VVSRIAYGLP (94 aa). Positions 189 to 222 are disordered; the sequence is ALSGRRRVSEPASPPPPRRNDEEQDGAPARPPSH.

Belongs to the RecR family.

Functionally, may play a role in DNA repair. It seems to be involved in an RecBC-independent recombinational process of DNA repair. It may act with RecF and RecO. This is Recombination protein RecR from Deinococcus geothermalis (strain DSM 11300 / CIP 105573 / AG-3a).